Consider the following 247-residue polypeptide: 3-deoxy-manno-octulosonate cytidylyltransferase (247 aa).

The protein belongs to the KdsB family.

It localises to the cytoplasm. It carries out the reaction 3-deoxy-alpha-D-manno-oct-2-ulosonate + CTP = CMP-3-deoxy-beta-D-manno-octulosonate + diphosphate. Its pathway is nucleotide-sugar biosynthesis; CMP-3-deoxy-D-manno-octulosonate biosynthesis; CMP-3-deoxy-D-manno-octulosonate from 3-deoxy-D-manno-octulosonate and CTP: step 1/1. It functions in the pathway bacterial outer membrane biogenesis; lipopolysaccharide biosynthesis. Its function is as follows. Activates KDO (a required 8-carbon sugar) for incorporation into bacterial lipopolysaccharide in Gram-negative bacteria. The protein is 3-deoxy-manno-octulosonate cytidylyltransferase of Chlorobium phaeobacteroides (strain DSM 266 / SMG 266 / 2430).